The chain runs to 129 residues: Fluoride-specific ion channel FluC (129 aa).

Helical transmembrane passes span 10-30 (LLVG…ALAF), 35-55 (PGFP…IGFL), 71-91 (LFLV…MFEG), and 105-125 (LYLA…IIAA). 2 residues coordinate Na(+): Gly-79 and Thr-82.

This sequence belongs to the fluoride channel Fluc/FEX (TC 1.A.43) family.

Its subcellular location is the cell inner membrane. It catalyses the reaction fluoride(in) = fluoride(out). With respect to regulation, na(+) is not transported, but it plays an essential structural role and its presence is essential for fluoride channel function. Fluoride-specific ion channel. Important for reducing fluoride concentration in the cell, thus reducing its toxicity. This is Fluoride-specific ion channel FluC from Chlorobium luteolum (strain DSM 273 / BCRC 81028 / 2530) (Pelodictyon luteolum).